Consider the following 155-residue polypeptide: Putative pre-16S rRNA nuclease (155 aa).

The protein belongs to the YqgF nuclease family.

It is found in the cytoplasm. Functionally, could be a nuclease involved in processing of the 5'-end of pre-16S rRNA. The protein is Putative pre-16S rRNA nuclease of Xylella fastidiosa (strain M12).